Consider the following 673-residue polypeptide: Probable multidrug resistance ABC transporter ATP-binding/permease protein YheH (673 aa).

5 consecutive transmembrane segments (helical) span residues 18 to 38 (LITA…GPFI), 146 to 166 (IKGM…SVFF), 223 to 243 (LYVT…GIFT), 245 to 265 (LFLL…IIWL), and 347 to 367 (LAFV…AGIV). The 381-residue stretch at 18–398 (LITAVLLLTV…IVNQFSKLEL (381 aa)) folds into the ABC transmembrane type-1 domain. Residues 430–664 (VEFRDVSFAY…EGQYYQMYEL (235 aa)) enclose the ABC transporter domain. ATP is bound at residue 463–470 (GHTGSGKS).

Belongs to the ABC transporter superfamily. Heterodimer composed of YheH and YheI.

Its subcellular location is the cell membrane. Its activity is regulated as follows. Inhibited by ortho-vanadate. In terms of biological role, involved in the transport of four structurally unrelated drugs, including doxorubicin and mitoxantrone. Transmembrane domains (TMD) form a pore in the membrane and the ATP-binding domain (NBD) is responsible for energy generation. This chain is Probable multidrug resistance ABC transporter ATP-binding/permease protein YheH (yheH), found in Bacillus subtilis (strain 168).